Reading from the N-terminus, the 493-residue chain is Cysteine--tRNA ligase (493 aa).

A Zn(2+)-binding site is contributed by Cys-41. The 'HIGH' region signature appears at 43–53; the sequence is PTVYNYPHIGN. Zn(2+) contacts are provided by Cys-231, His-256, and Glu-260. The 'KMSKS' region motif lies at 296-300; the sequence is KMSKS. Position 299 (Lys-299) interacts with ATP.

Belongs to the class-I aminoacyl-tRNA synthetase family. In terms of assembly, monomer. The cofactor is Zn(2+).

It localises to the cytoplasm. It catalyses the reaction tRNA(Cys) + L-cysteine + ATP = L-cysteinyl-tRNA(Cys) + AMP + diphosphate. The sequence is that of Cysteine--tRNA ligase from Novosphingobium aromaticivorans (strain ATCC 700278 / DSM 12444 / CCUG 56034 / CIP 105152 / NBRC 16084 / F199).